The following is a 169-amino-acid chain: Large ribosomal subunit protein uL10 (169 aa).

It belongs to the universal ribosomal protein uL10 family. In terms of assembly, part of the ribosomal stalk of the 50S ribosomal subunit. The N-terminus interacts with L11 and the large rRNA to form the base of the stalk. The C-terminus forms an elongated spine to which L12 dimers bind in a sequential fashion forming a multimeric L10(L12)X complex.

Functionally, forms part of the ribosomal stalk, playing a central role in the interaction of the ribosome with GTP-bound translation factors. This chain is Large ribosomal subunit protein uL10, found in Rickettsia massiliae (strain Mtu5).